The following is a 651-amino-acid chain: Maternal embryonic leucine zipper kinase (651 aa).

Residues 11–263 (YELHETIGTG…MKNLLNHPWI (253 aa)) enclose the Protein kinase domain. ATP contacts are provided by residues 17-25 (IGTGGFAKV) and lysine 40. Threonine 56 carries the phosphothreonine; by autocatalysis modification. The active-site Proton acceptor is the aspartate 132. Tyrosine 163 is modified (phosphotyrosine; by autocatalysis). At threonine 167 the chain carries Phosphothreonine; by autocatalysis. A phosphoserine; by autocatalysis mark is found at serine 171 and serine 253. Positions 282–321 (LDDDCVTELSVHHRNNRQTMEDLISLWQYDHLTATYLLLL) are UBA-like. The interval 326–651 (RGKPVRLRLS…VEDILSSCKV (326 aa)) is autoinhibitory region. 3 positions are modified to phosphoserine; by autocatalysis: serine 336, serine 343, and serine 356. Tyrosine 367 carries the post-translational modification Phosphotyrosine. Serine 391 is subject to Phosphoserine; by autocatalysis. Phosphothreonine; by autocatalysis is present on threonine 398. Serine 407 is modified (phosphoserine; by autocatalysis). Threonine 409 carries the post-translational modification Phosphothreonine. Serine 431 carries the phosphoserine; by autocatalysis modification. Residue threonine 478 is modified to Phosphothreonine. Position 494 is a phosphothreonine; by autocatalysis (threonine 494). Serine 498 is subject to Phosphoserine. At serine 505 the chain carries Phosphoserine; by autocatalysis. Phosphothreonine is present on threonine 518. Position 529 is a phosphoserine; by autocatalysis (serine 529). At serine 529 the chain carries Phosphoserine. At threonine 539 the chain carries Phosphothreonine; by autocatalysis. A KA1 domain is found at 602–651 (SDFGKVTMQFELEVCQLQKPDVVGIRRQRLKGDAWVYKRLVEDILSSCKV).

The protein belongs to the protein kinase superfamily. CAMK Ser/Thr protein kinase family. SNF1 subfamily. As to quaternary structure, monomer. Interacts with ZNF622 and PPP1R8. In terms of processing, autophosphorylated: autophosphorylation of the T-loop at Thr-167 and Ser-171 is required for activation. Thr-478 phosphorylation during mitosis promotes interaction with PPP1R8. Expressed in placenta, kidney, thymus, testis, ovary and intestine.

The protein resides in the cell membrane. It catalyses the reaction L-tyrosyl-[protein] + ATP = O-phospho-L-tyrosyl-[protein] + ADP + H(+). The catalysed reaction is L-seryl-[protein] + ATP = O-phospho-L-seryl-[protein] + ADP + H(+). The enzyme catalyses L-threonyl-[protein] + ATP = O-phospho-L-threonyl-[protein] + ADP + H(+). Activated by autophosphorylation of the T-loop at Thr-167 and Ser-171: in contrast to other members of the SNF1 subfamily, phosphorylation at Thr-167 is not mediated by STK11/LKB1 but via autophosphorylation instead. Inhibited by calcium-binding. Kinase activity is also regulated by reducing agents: dithiothreitol (DTT) or reduced glutathione are required for kinase activity in vitro; such dependence is however not due to the presence of disulfide bonds. Its function is as follows. Serine/threonine-protein kinase involved in various processes such as cell cycle regulation, self-renewal of stem cells, apoptosis and splicing regulation. Has a broad substrate specificity; phosphorylates BCL2L14, CDC25B, MAP3K5/ASK1 and ZNF622. Acts as an activator of apoptosis by phosphorylating and activating MAP3K5/ASK1. Acts as a regulator of cell cycle, notably by mediating phosphorylation of CDC25B, promoting localization of CDC25B to the centrosome and the spindle poles during mitosis. Plays a key role in cell proliferation and carcinogenesis. Required for proliferation of embryonic and postnatal multipotent neural progenitors. Phosphorylates and inhibits BCL2L14, possibly leading to affect mammary carcinogenesis by mediating inhibition of the pro-apoptotic function of BCL2L14. Also involved in the inhibition of spliceosome assembly during mitosis by phosphorylating ZNF622, thereby contributing to its redirection to the nucleus. May also play a role in primitive hematopoiesis. The chain is Maternal embryonic leucine zipper kinase (MELK) from Homo sapiens (Human).